The sequence spans 331 residues: Glycerophosphodiester phosphodiesterase 1 (331 aa).

Residues 1-3 (MWL) lie on the Cytoplasmic side of the membrane. Residues 4–24 (WEDQGGLLGPFSFLLLVLLLV) traverse the membrane as a helical segment. Over 25-247 (TRSPVNACLL…KPRYDTFWKH (223 aa)) the chain is Lumenal. The GP-PDE domain occupies 65-331 (ISAIAHRGGS…SMVEDCEPHF (267 aa)). Mg(2+) is bound by residues E97 and D99. N-linked (GlcNAc...) asparagine glycosylation is present at N168. D174 is a binding site for Mg(2+). Residue N198 is glycosylated (N-linked (GlcNAc...) asparagine). Residues 248–268 (FIFVMMDILLDWSMHNILWYL) traverse the membrane as a helical segment. The Cytoplasmic portion of the chain corresponds to 269 to 331 (CGISAFLMQK…SMVEDCEPHF (63 aa)).

Belongs to the glycerophosphoryl diester phosphodiesterase family. As to quaternary structure, interacts with PRAF2. Interacts with RGS16. It depends on Mg(2+) as a cofactor. Post-translationally, N-glycosylated. As to expression, widely expressed.

Its subcellular location is the cell membrane. It is found in the cytoplasmic vesicle membrane. The catalysed reaction is sn-glycero-3-phospho-1D-myo-inositol + H2O = myo-inositol + sn-glycerol 3-phosphate + H(+). It catalyses the reaction 1-O-(1Z-octadecenyl)-sn-glycero-3-phospho-(N-5Z,8Z,11Z,14Z-eicosatetraenoyl)-ethanolamine + H2O = 1-O-(1Z-octadecenyl)-sn-glycero-3-phosphate + N-(5Z,8Z,11Z,14Z-eicosatetraenoyl)-ethanolamine + H(+). It carries out the reaction 1-O-(1Z-octadecenyl)-sn-glycero-3-phospho-(N-9Z-octadecenoyl)-ethanolamine + H2O = 1-O-(1Z-octadecenyl)-sn-glycero-3-phosphate + N-(9Z-octadecenoyl) ethanolamine + H(+). The enzyme catalyses 1-O-(1Z-octadecenyl)-sn-glycero-3-phospho-N-hexadecanoyl-ethanolamine + H2O = 1-O-(1Z-octadecenyl)-sn-glycero-3-phosphate + N-hexadecanoylethanolamine + H(+). The catalysed reaction is N-(4Z,7Z,10Z,13Z,16Z,19Z)-docosahexaenoyl-sn-glycero-3-phosphoethanolamine + H2O = N-(4Z,7Z,10Z,13Z,16Z,19Z)-docosahexaenoyl ethanolamine + sn-glycerol 3-phosphate + H(+). It catalyses the reaction N-eicosanoyl-sn-glycero-3-phosphoethanolamine + H2O = N-eicosanoyl ethanolamine + sn-glycerol 3-phosphate + H(+). It carries out the reaction N-hexadecanoyl-sn-glycero-3-phosphoethanolamine + H2O = N-hexadecanoylethanolamine + sn-glycerol 3-phosphate + H(+). The enzyme catalyses N-(9Z-octadecenoyl)-sn-glycero-3-phosphoethanolamine + H2O = N-(9Z-octadecenoyl) ethanolamine + sn-glycerol 3-phosphate + H(+). The catalysed reaction is N-(5Z,8Z,11Z,14Z-eicosatetraenoyl)-sn-glycero-3-phosphoethanolamine + H2O = N-(5Z,8Z,11Z,14Z-eicosatetraenoyl)-ethanolamine + sn-glycerol 3-phosphate + H(+). With respect to regulation, inhibited by EDTA, calcium chloride, and zinc chloride. Enhanced by magnesium chloride. Glycerophosphodiester phosphodiesterase activity can be modulated by G-protein signaling pathways. In terms of biological role, hydrolyzes the phosphodiester bond of glycerophosphodiesters such as glycerophosphoinositol (GroPIns) and glycerophosphoethanolamine (GroPEth), to yield a glycerol phosphate and an alcohol. Hydrolyzes glycerophospho-N-acylethanolamines to N-acylethanolamines in the brain and participates in bioactive N-acylethanolamine biosynthesis such as anandamide (an endocannabinoid), N-palmitoylethanolamine (an anti-inflammatory), and N-oleoylethanolamine (an anorexic). In addition, has a lysophospholipase D activity by hydrolyzing N-acyl-lysoplasmenylethanolamine (N-acyl-lysoPlsEt) to N-acylethanolamine. However lysophospholipase D activity is lower than glycerophosphodiester phosphodiesterase activity. Has little or no activity towards glycerophosphocholine. In Homo sapiens (Human), this protein is Glycerophosphodiester phosphodiesterase 1.